An 87-amino-acid polypeptide reads, in one-letter code: Small ribosomal subunit protein uS17 (87 aa).

Belongs to the universal ribosomal protein uS17 family. In terms of assembly, part of the 30S ribosomal subunit.

Its function is as follows. One of the primary rRNA binding proteins, it binds specifically to the 5'-end of 16S ribosomal RNA. The chain is Small ribosomal subunit protein uS17 from Bacillus pumilus (strain SAFR-032).